Reading from the N-terminus, the 224-residue chain is 2-C-methyl-D-erythritol 4-phosphate cytidylyltransferase (224 aa).

The protein belongs to the IspD/TarI cytidylyltransferase family. IspD subfamily.

The catalysed reaction is 2-C-methyl-D-erythritol 4-phosphate + CTP + H(+) = 4-CDP-2-C-methyl-D-erythritol + diphosphate. The protein operates within isoprenoid biosynthesis; isopentenyl diphosphate biosynthesis via DXP pathway; isopentenyl diphosphate from 1-deoxy-D-xylulose 5-phosphate: step 2/6. In terms of biological role, catalyzes the formation of 4-diphosphocytidyl-2-C-methyl-D-erythritol from CTP and 2-C-methyl-D-erythritol 4-phosphate (MEP). This Caldicellulosiruptor bescii (strain ATCC BAA-1888 / DSM 6725 / KCTC 15123 / Z-1320) (Anaerocellum thermophilum) protein is 2-C-methyl-D-erythritol 4-phosphate cytidylyltransferase.